Consider the following 374-residue polypeptide: Queuine tRNA-ribosyltransferase (374 aa).

Asp-89 serves as the catalytic Proton acceptor. Substrate is bound by residues 89–93 (DSGGF), Asp-143, Gln-187, and Gly-214. Positions 245-251 (GVGKPED) are RNA binding. Residue Asp-264 is the Nucleophile of the active site. The tract at residues 269-273 (TRNAR) is RNA binding; important for wobble base 34 recognition. Zn(2+) contacts are provided by Cys-302, Cys-304, Cys-307, and His-333.

This sequence belongs to the queuine tRNA-ribosyltransferase family. Homodimer. Within each dimer, one monomer is responsible for RNA recognition and catalysis, while the other monomer binds to the replacement base PreQ1. Zn(2+) is required as a cofactor.

It catalyses the reaction 7-aminomethyl-7-carbaguanine + guanosine(34) in tRNA = 7-aminomethyl-7-carbaguanosine(34) in tRNA + guanine. It participates in tRNA modification; tRNA-queuosine biosynthesis. Its function is as follows. Catalyzes the base-exchange of a guanine (G) residue with the queuine precursor 7-aminomethyl-7-deazaguanine (PreQ1) at position 34 (anticodon wobble position) in tRNAs with GU(N) anticodons (tRNA-Asp, -Asn, -His and -Tyr). Catalysis occurs through a double-displacement mechanism. The nucleophile active site attacks the C1' of nucleotide 34 to detach the guanine base from the RNA, forming a covalent enzyme-RNA intermediate. The proton acceptor active site deprotonates the incoming PreQ1, allowing a nucleophilic attack on the C1' of the ribose to form the product. After dissociation, two additional enzymatic reactions on the tRNA convert PreQ1 to queuine (Q), resulting in the hypermodified nucleoside queuosine (7-(((4,5-cis-dihydroxy-2-cyclopenten-1-yl)amino)methyl)-7-deazaguanosine). The polypeptide is Queuine tRNA-ribosyltransferase (Photorhabdus laumondii subsp. laumondii (strain DSM 15139 / CIP 105565 / TT01) (Photorhabdus luminescens subsp. laumondii)).